The chain runs to 263 residues: uncharacterized protein (263 aa).

Residues 1–22 (MGYLKRLVLYIVIMVMSVFIIG) form the signal peptide. Cys23 carries N-palmitoyl cysteine lipidation. The S-diacylglycerol cysteine moiety is linked to residue Cys23.

Belongs to the staphylococcal tandem lipoprotein family.

Its subcellular location is the cell membrane. This is an uncharacterized protein from Staphylococcus aureus (strain N315).